The following is a 200-amino-acid chain: Large ribosomal subunit protein uL4 (200 aa).

Residues 43-71 form a disordered region; sequence RAQKTRAEVSGSGKKPWRQKGTGRARSGD.

Belongs to the universal ribosomal protein uL4 family. Part of the 50S ribosomal subunit.

One of the primary rRNA binding proteins, this protein initially binds near the 5'-end of the 23S rRNA. It is important during the early stages of 50S assembly. It makes multiple contacts with different domains of the 23S rRNA in the assembled 50S subunit and ribosome. Its function is as follows. Forms part of the polypeptide exit tunnel. In Histophilus somni (strain 2336) (Haemophilus somnus), this protein is Large ribosomal subunit protein uL4.